The following is a 96-amino-acid chain: Putative pterin-4-alpha-carbinolamine dehydratase (96 aa).

The protein belongs to the pterin-4-alpha-carbinolamine dehydratase family.

The catalysed reaction is (4aS,6R)-4a-hydroxy-L-erythro-5,6,7,8-tetrahydrobiopterin = (6R)-L-erythro-6,7-dihydrobiopterin + H2O. The protein is Putative pterin-4-alpha-carbinolamine dehydratase of Prochlorococcus marinus (strain SARG / CCMP1375 / SS120).